The chain runs to 224 residues: MWVPTLSSSSCSSDERDESSGEAALTPVYLNVYDLTPVNNYLYWFGIGIFHSGIEAHNLEYCYGAHEYPTSGVYEVEPRNCPGFIFRRSVLLGTTSMSRSDFRSYMEKLSRKYHGDTYHLIAKNCNHFTEEVCLQLTGKPIPGWINRLARVGSFCNCLLPESIQLTAVSALPERLEFSDEDESNSEASSVSDEEGSEQHLINVADREIVYLQNKPVRLTREEIP.

The region spanning 26–163 is the PPPDE domain; the sequence is TPVYLNVYDL…FCNCLLPESI (138 aa). Active-site residues include histidine 51 and cysteine 125. The segment at 176–201 is disordered; the sequence is EFSDEDESNSEASSVSDEEGSEQHLI.

The protein belongs to the DeSI family.

The chain is DeSI-like protein At4g17486 from Arabidopsis thaliana (Mouse-ear cress).